The chain runs to 320 residues: 4-hydroxy-3-methylbut-2-enyl diphosphate reductase (320 aa).

Cys-13 serves as a coordination point for [4Fe-4S] cluster. The (2E)-4-hydroxy-3-methylbut-2-enyl diphosphate site is built by His-41 and His-75. Dimethylallyl diphosphate contacts are provided by His-41 and His-75. Isopentenyl diphosphate contacts are provided by His-41 and His-75. Residue Cys-97 participates in [4Fe-4S] cluster binding. His-125 provides a ligand contact to (2E)-4-hydroxy-3-methylbut-2-enyl diphosphate. Position 125 (His-125) interacts with dimethylallyl diphosphate. Isopentenyl diphosphate is bound at residue His-125. Glu-127 functions as the Proton donor in the catalytic mechanism. A (2E)-4-hydroxy-3-methylbut-2-enyl diphosphate-binding site is contributed by Thr-168. Residue Cys-225 coordinates [4Fe-4S] cluster. (2E)-4-hydroxy-3-methylbut-2-enyl diphosphate-binding residues include Ser-253, Ser-254, Asn-255, and Ser-302. Residues Ser-253, Ser-254, Asn-255, and Ser-302 each contribute to the dimethylallyl diphosphate site. Ser-253, Ser-254, Asn-255, and Ser-302 together coordinate isopentenyl diphosphate.

The protein belongs to the IspH family. The cofactor is [4Fe-4S] cluster.

The enzyme catalyses isopentenyl diphosphate + 2 oxidized [2Fe-2S]-[ferredoxin] + H2O = (2E)-4-hydroxy-3-methylbut-2-enyl diphosphate + 2 reduced [2Fe-2S]-[ferredoxin] + 2 H(+). The catalysed reaction is dimethylallyl diphosphate + 2 oxidized [2Fe-2S]-[ferredoxin] + H2O = (2E)-4-hydroxy-3-methylbut-2-enyl diphosphate + 2 reduced [2Fe-2S]-[ferredoxin] + 2 H(+). The protein operates within isoprenoid biosynthesis; dimethylallyl diphosphate biosynthesis; dimethylallyl diphosphate from (2E)-4-hydroxy-3-methylbutenyl diphosphate: step 1/1. Its pathway is isoprenoid biosynthesis; isopentenyl diphosphate biosynthesis via DXP pathway; isopentenyl diphosphate from 1-deoxy-D-xylulose 5-phosphate: step 6/6. Functionally, catalyzes the conversion of 1-hydroxy-2-methyl-2-(E)-butenyl 4-diphosphate (HMBPP) into a mixture of isopentenyl diphosphate (IPP) and dimethylallyl diphosphate (DMAPP). Acts in the terminal step of the DOXP/MEP pathway for isoprenoid precursor biosynthesis. The polypeptide is 4-hydroxy-3-methylbut-2-enyl diphosphate reductase (Chlorobium luteolum (strain DSM 273 / BCRC 81028 / 2530) (Pelodictyon luteolum)).